A 246-amino-acid polypeptide reads, in one-letter code: Uridylate kinase (246 aa).

Residue 13–16 coordinates ATP; the sequence is KLSG. Glycine 54 provides a ligand contact to UMP. Glycine 55 and arginine 59 together coordinate ATP. UMP is bound by residues aspartate 74 and 135 to 142; that span reads AGMPYFST. Residues asparagine 163, tyrosine 169, and aspartate 172 each contribute to the ATP site.

The protein belongs to the UMP kinase family. As to quaternary structure, homohexamer.

The protein resides in the cytoplasm. The catalysed reaction is UMP + ATP = UDP + ADP. The protein operates within pyrimidine metabolism; CTP biosynthesis via de novo pathway; UDP from UMP (UMPK route): step 1/1. With respect to regulation, inhibited by UTP. Catalyzes the reversible phosphorylation of UMP to UDP. The sequence is that of Uridylate kinase from Bifidobacterium longum (strain NCC 2705).